Here is a 195-residue protein sequence, read N- to C-terminus: Interferon tau-1 (195 aa).

Residues 1–23 form the signal peptide; it reads MAFVLSLLMALVLVSYGPGGSLG. 2 disulfides stabilise this stretch: cysteine 24–cysteine 122 and cysteine 52–cysteine 162.

This sequence belongs to the alpha/beta interferon family. IFN-alphaII subfamily. In terms of tissue distribution, constitutively and exclusively expressed in the mononuclear cells of the extraembryonic trophectoderm.

It is found in the secreted. Paracrine hormone primarily responsible for maternal recognition of pregnancy. Interacts with endometrial receptors, probably type I interferon receptors, and blocks estrogen receptor expression, preventing the estrogen-induced increase in oxytocin receptor expression in the endometrium. This results in the suppression of the pulsatile endometrial release of the luteolytic hormone prostaglandin F2-alpha, hindering the regression of the corpus luteum (luteolysis) and therefore a return to ovarian cyclicity. This, and a possible direct effect of IFN-tau on prostaglandin synthesis, leads in turn to continued ovarian progesterone secretion, which stimulates the secretion by the endometrium of the nutrients required for the growth of the conceptus. In summary, displays particularly high antiviral and antiproliferative potency concurrently with particular weak cytotoxicity, high antiluteolytic activity and immunomodulatory properties. In contrast with other IFNs, IFN-tau is not virally inducible. The polypeptide is Interferon tau-1 (IFNT1) (Ovis aries (Sheep)).